The sequence spans 206 residues: Thiamine-phosphate synthase (206 aa).

4-amino-2-methyl-5-(diphosphooxymethyl)pyrimidine is bound by residues 35 to 39 and Asn-67; that span reads QLRDK. Mg(2+) is bound by residues Asp-68 and Asp-87. Ser-106 contributes to the 4-amino-2-methyl-5-(diphosphooxymethyl)pyrimidine binding site. 132-134 is a 2-[(2R,5Z)-2-carboxy-4-methylthiazol-5(2H)-ylidene]ethyl phosphate binding site; it reads TGT. A 4-amino-2-methyl-5-(diphosphooxymethyl)pyrimidine-binding site is contributed by Lys-135. 2-[(2R,5Z)-2-carboxy-4-methylthiazol-5(2H)-ylidene]ethyl phosphate is bound by residues Gly-163 and 183-184; that span reads IS.

The protein belongs to the thiamine-phosphate synthase family. Mg(2+) serves as cofactor.

The enzyme catalyses 2-[(2R,5Z)-2-carboxy-4-methylthiazol-5(2H)-ylidene]ethyl phosphate + 4-amino-2-methyl-5-(diphosphooxymethyl)pyrimidine + 2 H(+) = thiamine phosphate + CO2 + diphosphate. The catalysed reaction is 2-(2-carboxy-4-methylthiazol-5-yl)ethyl phosphate + 4-amino-2-methyl-5-(diphosphooxymethyl)pyrimidine + 2 H(+) = thiamine phosphate + CO2 + diphosphate. It catalyses the reaction 4-methyl-5-(2-phosphooxyethyl)-thiazole + 4-amino-2-methyl-5-(diphosphooxymethyl)pyrimidine + H(+) = thiamine phosphate + diphosphate. The protein operates within cofactor biosynthesis; thiamine diphosphate biosynthesis; thiamine phosphate from 4-amino-2-methyl-5-diphosphomethylpyrimidine and 4-methyl-5-(2-phosphoethyl)-thiazole: step 1/1. Condenses 4-methyl-5-(beta-hydroxyethyl)thiazole monophosphate (THZ-P) and 2-methyl-4-amino-5-hydroxymethyl pyrimidine pyrophosphate (HMP-PP) to form thiamine monophosphate (TMP). The protein is Thiamine-phosphate synthase of Methanospirillum hungatei JF-1 (strain ATCC 27890 / DSM 864 / NBRC 100397 / JF-1).